A 267-amino-acid chain; its full sequence is Interleukin-1 beta (267 aa).

A propeptide spanning residues 1–115 is cleaved from the precursor; the sequence is MAPVPELTSE…DTWDDGFVCD (115 aa).

Belongs to the IL-1 family. In terms of assembly, monomer. In its precursor form, weakly interacts with full-length MEFV; the mature cytokine does not interact at all. Interacts with integrins ITGAV:ITGBV and ITGA5:ITGB1; integrin-binding is required for IL1B signaling. Interacts with cargo receptor TMED10; the interaction is direct and is required for the secretion of IL1B mature form. Interacts with HSP90AB1; the interaction facilitates cargo translocation into the ERGIC. Interacts with HSP90B1; the interaction facilitates cargo translocation into the ERGIC.

The protein resides in the cytoplasm. It localises to the cytosol. Its subcellular location is the secreted. The protein localises to the lysosome. It is found in the extracellular exosome. Functionally, potent pro-inflammatory cytokine. Initially discovered as the major endogenous pyrogen, induces prostaglandin synthesis, neutrophil influx and activation, T-cell activation and cytokine production, B-cell activation and antibody production, and fibroblast proliferation and collagen production. Promotes Th17 differentiation of T-cells. Synergizes with IL12/interleukin-12 to induce IFNG synthesis from T-helper 1 (Th1) cells. Plays a role in angiogenesis by inducing VEGF production synergistically with TNF and IL6. Involved in transduction of inflammation downstream of pyroptosis: its mature form is specifically released in the extracellular milieu by passing through the gasdermin-D (GSDMD) pore. This chain is Interleukin-1 beta (IL1B), found in Felis catus (Cat).